Reading from the N-terminus, the 838-residue chain is G-protein coupled receptor-associated sorting protein 2 (838 aa).

3 disordered regions span residues 1–121 (MTGA…PGAR), 218–293 (ASNE…NPFS), and 531–552 (LELS…PSPE). The segment covering 13–31 (KPEKKAGEEVVAGPEREND) has biased composition (basic and acidic residues). The span at 220 to 235 (NESGFWSADETSTASS) shows a compositional bias: polar residues. The segment covering 255–271 (RSRHRAKHQTNPRSRPR) has biased composition (basic residues). 2 positions are modified to phosphoserine: Ser-282 and Ser-284. Residues 542 to 552 (SLLQPDQPSPE) are compositionally biased toward polar residues.

This sequence belongs to the GPRASP family. In terms of assembly, interacts with cytoplasmic tails of a variety of G protein-coupled receptors such as muscarinic acetylcholine receptor M1/CHRM1 and calcitonin receptor/CALCR.

Its function is as follows. May play a role in regulation of a variety of G-protein coupled receptors. In Pongo abelii (Sumatran orangutan), this protein is G-protein coupled receptor-associated sorting protein 2 (GPRASP2).